A 323-amino-acid polypeptide reads, in one-letter code: RING-H2 finger protein ATL32 (323 aa).

The first 28 residues, methionine 1 to alanine 28, serve as a signal peptide directing secretion. The chain crosses the membrane as a helical span at residues threonine 47–isoleucine 67. The RING-type; atypical zinc-finger motif lies at cysteine 124–arginine 166. Residues serine 210–arginine 229 are disordered.

This sequence belongs to the RING-type zinc finger family. ATL subfamily.

The protein localises to the membrane. The catalysed reaction is S-ubiquitinyl-[E2 ubiquitin-conjugating enzyme]-L-cysteine + [acceptor protein]-L-lysine = [E2 ubiquitin-conjugating enzyme]-L-cysteine + N(6)-ubiquitinyl-[acceptor protein]-L-lysine.. It functions in the pathway protein modification; protein ubiquitination. This chain is RING-H2 finger protein ATL32 (ATL32), found in Arabidopsis thaliana (Mouse-ear cress).